The following is a 471-amino-acid chain: Ribulose bisphosphate carboxylase large chain (471 aa).

Asn-115 and Thr-165 together coordinate substrate. Lys-167 acts as the Proton acceptor in catalysis. Lys-169 lines the substrate pocket. The Mg(2+) site is built by Lys-193, Asp-195, and Glu-196. N6-carboxylysine is present on Lys-193. His-286 functions as the Proton acceptor in the catalytic mechanism. Residues Arg-287, His-319, and Ser-371 each contribute to the substrate site.

It belongs to the RuBisCO large chain family. Type I subfamily. As to quaternary structure, heterohexadecamer of 8 large chains and 8 small chains. It depends on Mg(2+) as a cofactor.

It is found in the carboxysome. The catalysed reaction is 2 (2R)-3-phosphoglycerate + 2 H(+) = D-ribulose 1,5-bisphosphate + CO2 + H2O. It catalyses the reaction D-ribulose 1,5-bisphosphate + O2 = 2-phosphoglycolate + (2R)-3-phosphoglycerate + 2 H(+). RuBisCO catalyzes two reactions: the carboxylation of D-ribulose 1,5-bisphosphate, the primary event in carbon dioxide fixation, as well as the oxidative fragmentation of the pentose substrate in the photorespiration process. Both reactions occur simultaneously and in competition at the same active site. The sequence is that of Ribulose bisphosphate carboxylase large chain from Prochlorococcus marinus (strain MIT 9301).